Consider the following 475-residue polypeptide: ATP synthase subunit beta (475 aa).

161–168 (GGAGVGKT) serves as a coordination point for ATP.

It belongs to the ATPase alpha/beta chains family. As to quaternary structure, F-type ATPases have 2 components, CF(1) - the catalytic core - and CF(0) - the membrane proton channel. CF(1) has five subunits: alpha(3), beta(3), gamma(1), delta(1), epsilon(1). CF(0) has three main subunits: a(1), b(2) and c(9-12). The alpha and beta chains form an alternating ring which encloses part of the gamma chain. CF(1) is attached to CF(0) by a central stalk formed by the gamma and epsilon chains, while a peripheral stalk is formed by the delta and b chains.

The protein localises to the cell membrane. The catalysed reaction is ATP + H2O + 4 H(+)(in) = ADP + phosphate + 5 H(+)(out). In terms of biological role, produces ATP from ADP in the presence of a proton gradient across the membrane. The catalytic sites are hosted primarily by the beta subunits. This is ATP synthase subunit beta from Mycoplasma mycoides subsp. mycoides SC (strain CCUG 32753 / NCTC 10114 / PG1).